A 296-amino-acid chain; its full sequence is Polyamine aminopropyltransferase (296 aa).

The PABS domain occupies 5-238; the sequence is ELWYETLHAN…GIMTFAWATQ (234 aa). Residue Q33 participates in S-methyl-5'-thioadenosine binding. The spermidine site is built by H64 and D88. S-methyl-5'-thioadenosine contacts are provided by residues E108 and 140–141; that span reads DG. The Proton acceptor role is filled by D158. 158-161 contributes to the spermidine binding site; it reads DCTD. Position 165 (P165) interacts with S-methyl-5'-thioadenosine.

It belongs to the spermidine/spermine synthase family. In terms of assembly, homodimer or homotetramer.

Its subcellular location is the cytoplasm. It carries out the reaction S-adenosyl 3-(methylsulfanyl)propylamine + putrescine = S-methyl-5'-thioadenosine + spermidine + H(+). Its pathway is amine and polyamine biosynthesis; spermidine biosynthesis; spermidine from putrescine: step 1/1. In terms of biological role, catalyzes the irreversible transfer of a propylamine group from the amino donor S-adenosylmethioninamine (decarboxy-AdoMet) to putrescine (1,4-diaminobutane) to yield spermidine. In Yersinia pestis bv. Antiqua (strain Antiqua), this protein is Polyamine aminopropyltransferase.